The sequence spans 208 residues: Thymidylate kinase (208 aa).

7–14 (GIDGAGKT) contributes to the ATP binding site.

It belongs to the thymidylate kinase family.

It catalyses the reaction dTMP + ATP = dTDP + ADP. Functionally, phosphorylation of dTMP to form dTDP in both de novo and salvage pathways of dTTP synthesis. This Xylella fastidiosa (strain Temecula1 / ATCC 700964) protein is Thymidylate kinase.